The chain runs to 162 residues: Protein-export protein SecB 2 (162 aa).

Belongs to the SecB family. In terms of assembly, homotetramer, a dimer of dimers. One homotetramer interacts with 1 SecA dimer.

It is found in the cytoplasm. Functionally, one of the proteins required for the normal export of preproteins out of the cell cytoplasm. It is a molecular chaperone that binds to a subset of precursor proteins, maintaining them in a translocation-competent state. It also specifically binds to its receptor SecA. This is Protein-export protein SecB 2 from Polaromonas naphthalenivorans (strain CJ2).